Here is a 445-residue protein sequence, read N- to C-terminus: Plasmid recombination enzyme (445 aa).

2 residues coordinate DNA: Tyr45 and Tyr113.

It belongs to the plasmid mobilization pre family.

The protein is Plasmid recombination enzyme of Bacillus thuringiensis.